Reading from the N-terminus, the 144-residue chain is Large ribosomal subunit protein uL13 (144 aa).

Belongs to the universal ribosomal protein uL13 family. Part of the 50S ribosomal subunit.

This protein is one of the early assembly proteins of the 50S ribosomal subunit, although it is not seen to bind rRNA by itself. It is important during the early stages of 50S assembly. The protein is Large ribosomal subunit protein uL13 of Pelotomaculum thermopropionicum (strain DSM 13744 / JCM 10971 / SI).